A 584-amino-acid chain; its full sequence is AAA ATPase forming ring-shaped complexes (584 aa).

A coiled-coil region spans residues 10-96 (AQSGTEHAEQ…LKENLDAVTH (87 aa)). Positions 40–66 (HQLQSAQRHAAGLSERRRAAEAQTQTA) are disordered. An ATP-binding site is contributed by 292–297 (GTGKTM).

It belongs to the AAA ATPase family. Homohexamer. Assembles into a hexameric ring structure.

In Micrococcus luteus (strain ATCC 4698 / DSM 20030 / JCM 1464 / CCM 169 / CCUG 5858 / IAM 1056 / NBRC 3333 / NCIMB 9278 / NCTC 2665 / VKM Ac-2230) (Micrococcus lysodeikticus), this protein is AAA ATPase forming ring-shaped complexes.